A 539-amino-acid polypeptide reads, in one-letter code: Probable quinate permease (539 aa).

The Cytoplasmic portion of the chain corresponds to Met1–Tyr22. The helical transmembrane segment at Leu23–Gly43 threads the bilayer. At Thr44–Ser74 the chain is on the extracellular side. A helical transmembrane segment spans residues Cys75–Gly95. Over Arg96–Lys97 the chain is Cytoplasmic. The helical transmembrane segment at Trp98–Asn118 threads the bilayer. Residues Gly119–Arg130 lie on the Extracellular side of the membrane. Residues Val131–Leu151 traverse the membrane as a helical segment. Topologically, residues Ala152–Arg159 are cytoplasmic. The chain crosses the membrane as a helical span at residues Leu160 to Tyr180. Residues Gly181 to Trp193 are Extracellular-facing. Residues Leu194–Val214 form a helical membrane-spanning segment. Topologically, residues Lys215–Arg285 are cytoplasmic. Residues Leu286–Tyr306 form a helical membrane-spanning segment. At Tyr307–Leu325 the chain is on the extracellular side. A helical transmembrane segment spans residues Thr326–Ile346. Residues Asp347–Arg352 are Cytoplasmic-facing. Residues Leu353 to Ile373 form a helical membrane-spanning segment. The Extracellular segment spans residues Lys374–Asn387. Residues Gly388 to Trp408 traverse the membrane as a helical segment. Residues Asn409–Tyr456 are Cytoplasmic-facing. The chain crosses the membrane as a helical span at residues Gly457–Val477. Over Pro478–Glu539 the chain is Extracellular.

This sequence belongs to the major facilitator superfamily. Sugar transporter (TC 2.A.1.1) family. In terms of assembly, interacts with creB. Ubiquitinated. Deubiquitinated by creB, probably to control its activity or amount.

The protein resides in the cell membrane. Its function is as follows. Integral membrane transporter that imports quinic acid to be catabolized as a carbon source. This is Probable quinate permease (qutD) from Aspergillus niger (strain ATCC MYA-4892 / CBS 513.88 / FGSC A1513).